We begin with the raw amino-acid sequence, 462 residues long: Glutamate--tRNA ligase 2 (462 aa).

The short motif at 8-18 (PSPTGLLHVGG) is the 'HIGH' region element. The 'KMSKS' region signature appears at 227–231 (PLSKR). Lysine 230 is an ATP binding site.

The protein belongs to the class-I aminoacyl-tRNA synthetase family. Glutamate--tRNA ligase type 1 subfamily. As to quaternary structure, monomer.

Its subcellular location is the cytoplasm. The enzyme catalyses tRNA(Glu) + L-glutamate + ATP = L-glutamyl-tRNA(Glu) + AMP + diphosphate. Its function is as follows. Catalyzes the attachment of glutamate to tRNA(Glu) in a two-step reaction: glutamate is first activated by ATP to form Glu-AMP and then transferred to the acceptor end of tRNA(Glu). In Thermosipho melanesiensis (strain DSM 12029 / CIP 104789 / BI429), this protein is Glutamate--tRNA ligase 2.